Here is a 1323-residue protein sequence, read N- to C-terminus: MEFPTQPKLVDGKSIIYPPGVKEITDKISNDEVVKRLKMVVKTYMDMDQDSEEEKQQYLPLALHLSSEFFLRNPNKDVRLLVACCLADIFRIYAPEAPYTSHDKLKEIFLFITRQLKGLEDTKSPQFNRYFYLLENLAWVKSYNICFELEDCNEIFIQLFKTLFSVINNSHNQKVQMHMLDLMSSITMEGDGVTQEQLDSILINLISAHKNLNKQAFDLAKVLLKRTAQTIEPCIANFFNQVLVLGKSSVSDLSEHVFDLIQELFAIDPHLLLSVMPQLEFKLKSNDGEERLAVVRLLAKLFGSKDSDLATQNRPLWQCFLGRFNDIHVPVRLESVKFASHCLMNHPDLAKDLTEFLKVRSHDPEEAIRHDVIVTIITAAKKDLFLVNDQLLGFVRERTLDKRWRVRKEAMMGLAQLYKKYCLHGEGGKDAAEKVSWIKDKLLHIYYQNSIDDKLLVEKIFAQQLVPHNLETEERMKCLYYLYASLDPNAVKALNEMWKCQNMLRSHVRELLDLHKQPTSEANTTAMFAKLMTVAKNLPDPGKAQDFVKKFNQVLGEDEKLRSQLEVLISPSCSCKQADVCVRDIARKVANPKQPTNPFLEMVKFLLERIAPVHIDSEAISALVKLMNKSIEGTADDEEEGVSPDSAIRAGLELLKVLSFTHPTSFHSDETYESLLQCLRMEDDKVAEAAIQIFRNTGHRIETDLPQIRSALIPILHQKAKRGTPHQAKQAVHCIHSIFSNKEVQLAQIFEPLSRSLNADVPEQLVTPLVSLGHISMLAPDQFASPMKSVVANFIVKDLLMNDRSNGDKNGKLWCPDEEVSPEVLAKGQAIKLLVRWLLGMKNNQSKSANSTLRLLSAMLVSEGDLTEQKRISKSDMSRLRLAAGAAIMKLAQEPCYHEIITPEQFQLCALVINDECYQVRQIFAQKLHKALVKLQLPLEYMAIFALCAKDPVKERRAHARQCLLKNISIRREYIKQNPVSNEKLLSLLPEYVVPYMIHLLAHDPDFTKPQDIDQLRDIKECLWFMLEVLMTKNENNSHAFMKKLCENIKQTRDAQAPDDPKANEKLFTVCDVALCVVYNKSAPCHSESSKDPVLPLTFFTQPDKDFSSKSYITDEARNLLLTGKPKPMTVLGMVNKPLNATGRRPYSRSTGSEISNNVSINSESDASVANRQSSEVPEIGVSENDENPVRLISVPPAKTETVKNKEVNLDQTAPSNTGTERGKKRSAASAGAENIRKESEEKKADNISATPTPKPRRGRPPKSESQGSAAKNDETSKPSGRGRKRAAANQESSGAQEAANAKVPKQDSTAKKTAQRQIDLHR.

An HEAT repeat occupies 385–421; sequence FLVNDQLLGFVRERTLDKRWRVRKEAMMGLAQLYKKY. A disordered region spans residues 1139–1323; that stretch reads LNATGRRPYS…TAQRQIDLHR (185 aa). Positions 1153 to 1165 are enriched in low complexity; that stretch reads SEISNNVSINSES. Polar residues-rich tracts occupy residues 1166–1176 and 1210–1220; these read DASVANRQSSE and LDQTAPSNTGT. Basic and acidic residues predominate over residues 1235 to 1246; it reads NIRKESEEKKAD.

As to quaternary structure, interacts with the cohesin complex. Binds chromatin in a cohesin-dependent manner.

The protein resides in the nucleus. Its function is as follows. May regulate sister chromatid cohesion during mitosis and couple it to DNA replication. This Xenopus laevis (African clawed frog) protein is Sister chromatid cohesion protein PDS5 homolog A-A (pds5a-a).